A 470-amino-acid polypeptide reads, in one-letter code: Siroheme synthase (470 aa).

The tract at residues 1 to 203 (MDYLPIFVEL…GQIQQAEKQL (203 aa)) is precorrin-2 dehydrogenase /sirohydrochlorin ferrochelatase. NAD(+) is bound by residues 22 to 23 (EV) and 43 to 44 (PE). A Phosphoserine modification is found at Ser-128. The uroporphyrinogen-III C-methyltransferase stretch occupies residues 214–470 (GELALVGAGP…ISRPAVVDFA (257 aa)). Pro-223 lines the S-adenosyl-L-methionine pocket. The Proton acceptor role is filled by Asp-246. The active-site Proton donor is Lys-268. S-adenosyl-L-methionine-binding positions include 299 to 301 (GGD), Ile-304, 329 to 330 (TA), Met-381, and Gly-410.

It in the N-terminal section; belongs to the precorrin-2 dehydrogenase / sirohydrochlorin ferrochelatase family. This sequence in the C-terminal section; belongs to the precorrin methyltransferase family.

It catalyses the reaction uroporphyrinogen III + 2 S-adenosyl-L-methionine = precorrin-2 + 2 S-adenosyl-L-homocysteine + H(+). It carries out the reaction precorrin-2 + NAD(+) = sirohydrochlorin + NADH + 2 H(+). The enzyme catalyses siroheme + 2 H(+) = sirohydrochlorin + Fe(2+). It functions in the pathway cofactor biosynthesis; adenosylcobalamin biosynthesis; precorrin-2 from uroporphyrinogen III: step 1/1. It participates in cofactor biosynthesis; adenosylcobalamin biosynthesis; sirohydrochlorin from precorrin-2: step 1/1. Its pathway is porphyrin-containing compound metabolism; siroheme biosynthesis; precorrin-2 from uroporphyrinogen III: step 1/1. The protein operates within porphyrin-containing compound metabolism; siroheme biosynthesis; siroheme from sirohydrochlorin: step 1/1. It functions in the pathway porphyrin-containing compound metabolism; siroheme biosynthesis; sirohydrochlorin from precorrin-2: step 1/1. Its function is as follows. Multifunctional enzyme that catalyzes the SAM-dependent methylations of uroporphyrinogen III at position C-2 and C-7 to form precorrin-2 via precorrin-1. Then it catalyzes the NAD-dependent ring dehydrogenation of precorrin-2 to yield sirohydrochlorin. Finally, it catalyzes the ferrochelation of sirohydrochlorin to yield siroheme. The chain is Siroheme synthase from Photorhabdus laumondii subsp. laumondii (strain DSM 15139 / CIP 105565 / TT01) (Photorhabdus luminescens subsp. laumondii).